A 203-amino-acid polypeptide reads, in one-letter code: RNA annealing protein YRA2 (203 aa).

M1 bears the N-acetylmethionine mark. 2 disordered regions span residues 1–60 (MDKA…REEP) and 137–203 (QPQR…YMKG). Polar residues predominate over residues 11–20 (NSHTDSSSNH). Residues 47–60 (SRSKDRLYREREEP) show a composition bias toward basic and acidic residues. Residues 64–138 (KRIRISKIPL…AKIEVEIYQP (75 aa)) enclose the RRM domain. 2 stretches are compositionally biased toward basic residues: residues 139–153 (QRKHSRMNAHNRRKQ) and 163–180 (PGSHYRQRPNRVSKKNKG).

Belongs to the YRA1 family. In terms of assembly, associates with mRNPs. Interacts with YRA1.

The protein localises to the nucleus. Involved in export of poly(A) mRNAs from the nucleus. Recruited to the coding sequences as well as poly-A sites of active genes. In Saccharomyces cerevisiae (strain Lalvin EC1118 / Prise de mousse) (Baker's yeast), this protein is RNA annealing protein YRA2 (YRA2).